The primary structure comprises 318 residues: Ferric enterobactin-binding periplasmic protein FepB (318 aa).

Residues 1–26 (MRLAPLYRNALLLTGLLLSGIAAVQA) form the signal peptide. The Fe/B12 periplasmic-binding domain occupies 48–318 (RIVSTSVTLT…QVLDRLKALF (271 aa)).

Belongs to the bacterial solute-binding protein 8 family. As to quaternary structure, the complex is composed of two ATP-binding proteins (FepC), two transmembrane proteins (FepD and FepG) and a solute-binding protein (FepB).

It is found in the periplasm. In terms of biological role, part of the ABC transporter complex FepBDGC involved in ferric enterobactin uptake. Binds ferric enterobactin. This Escherichia coli O6:H1 (strain CFT073 / ATCC 700928 / UPEC) protein is Ferric enterobactin-binding periplasmic protein FepB (fepB).